The primary structure comprises 200 residues: NADH-quinone oxidoreductase subunit I 1 (200 aa).

2 4Fe-4S ferredoxin-type domains span residues 52 to 82 (LNRHPDGLEKCVGCELCAWACPADAIYVEGA) and 98 to 127 (RVYQINYARCILCGLCIEACPTRALTMTNE). Residues Cys62, Cys65, Cys68, Cys72, Cys107, Cys110, Cys113, and Cys117 each coordinate [4Fe-4S] cluster. The tract at residues 181–200 (TERQVAVSKGEKPQDEGVEA) is disordered. Over residues 189-200 (KGEKPQDEGVEA) the composition is skewed to basic and acidic residues.

This sequence belongs to the complex I 23 kDa subunit family. NDH-1 is composed of 14 different subunits. Subunits NuoA, H, J, K, L, M, N constitute the membrane sector of the complex. [4Fe-4S] cluster is required as a cofactor.

It localises to the cell membrane. It catalyses the reaction a quinone + NADH + 5 H(+)(in) = a quinol + NAD(+) + 4 H(+)(out). Functionally, NDH-1 shuttles electrons from NADH, via FMN and iron-sulfur (Fe-S) centers, to quinones in the respiratory chain. The immediate electron acceptor for the enzyme in this species is believed to be ubiquinone. Couples the redox reaction to proton translocation (for every two electrons transferred, four hydrogen ions are translocated across the cytoplasmic membrane), and thus conserves the redox energy in a proton gradient. The sequence is that of NADH-quinone oxidoreductase subunit I 1 from Streptomyces avermitilis (strain ATCC 31267 / DSM 46492 / JCM 5070 / NBRC 14893 / NCIMB 12804 / NRRL 8165 / MA-4680).